We begin with the raw amino-acid sequence, 2153 residues long: RNA-directed RNA polymerase L (2153 aa).

Mn(2+)-binding residues include histidine 36, glutamate 54, aspartate 97, glutamate 110, and valine 111. The For endonuclease activity role is filled by lysine 124. The RdRp catalytic domain maps to threonine 957–methionine 1143. Aspartate 1100 contacts Mg(2+).

This sequence belongs to the Bunyavirales RNA polymerase family. In terms of assembly, interacts with the viral nucleoprotein. Mn(2+) is required as a cofactor. Requires Mg(2+) as cofactor.

Its subcellular location is the host cytoplasm. The protein localises to the host perinuclear region. The enzyme catalyses RNA(n) + a ribonucleoside 5'-triphosphate = RNA(n+1) + diphosphate. Its function is as follows. RNA-dependent RNA polymerase, which is responsible for the replication and transcription of the viral RNA genome using antigenomic RNA as an intermediate. During transcription, synthesizes subgenomic RNAs and assures their capping by a cap-snatching mechanism, which involves the endonuclease activity cleaving the host capped pre-mRNAs. These short capped RNAs are then used as primers for viral transcription. Cleaves ssRNA substrates but not DNA. Seems to downregulate the expression of its own and heterologous mRNAs through its endonuclease activity. This is RNA-directed RNA polymerase L from Abrothrix longipilis (Long-haired grass mouse).